The sequence spans 465 residues: Adenosylhomocysteinase (465 aa).

Positions 56, 131, and 191 each coordinate substrate. 192 to 194 provides a ligand contact to NAD(+); that stretch reads TTT. Substrate contacts are provided by K221 and D225. NAD(+)-binding positions include N226, 255-260, E278, N313, 334-336, and N379; these read GYGDVG and IGH.

The protein belongs to the adenosylhomocysteinase family. It depends on NAD(+) as a cofactor.

The protein resides in the cytoplasm. It catalyses the reaction S-adenosyl-L-homocysteine + H2O = L-homocysteine + adenosine. It functions in the pathway amino-acid biosynthesis; L-homocysteine biosynthesis; L-homocysteine from S-adenosyl-L-homocysteine: step 1/1. In terms of biological role, may play a key role in the regulation of the intracellular concentration of adenosylhomocysteine. The sequence is that of Adenosylhomocysteinase from Bartonella henselae (strain ATCC 49882 / DSM 28221 / CCUG 30454 / Houston 1) (Rochalimaea henselae).